A 763-amino-acid polypeptide reads, in one-letter code: Phosphoglycerol transferase I (763 aa).

Helical transmembrane passes span 1–21 (MSELLSFALFLASVLIYAWKA), 26–46 (WWFAATLTVLGLFVVLNITLY), 77–97 (ILPGVGIVLALTAVFVSLGWI), and 108–128 (FGYSLLALLLALGSVDASPAF).

This sequence belongs to the OpgB family.

Its subcellular location is the cell inner membrane. The enzyme catalyses a phosphatidylglycerol + a membrane-derived-oligosaccharide D-glucose = a 1,2-diacyl-sn-glycerol + a membrane-derived-oligosaccharide 6-(glycerophospho)-D-glucose.. It participates in glycan metabolism; osmoregulated periplasmic glucan (OPG) biosynthesis. Its function is as follows. Transfers a phosphoglycerol residue from phosphatidylglycerol to the membrane-bound nascent glucan backbones. The chain is Phosphoglycerol transferase I from Escherichia fergusonii (strain ATCC 35469 / DSM 13698 / CCUG 18766 / IAM 14443 / JCM 21226 / LMG 7866 / NBRC 102419 / NCTC 12128 / CDC 0568-73).